The primary structure comprises 316 residues: HPr kinase/phosphorylase (316 aa).

Active-site residues include histidine 143 and lysine 164. 158–165 (GEAGSGKS) lines the ATP pocket. Serine 165 serves as a coordination point for Mg(2+). Aspartate 182 serves as the catalytic Proton acceptor; for phosphorylation activity. Proton donor; for dephosphorylation activity. The interval 206 to 215 (LEVRGLGVLN) is important for the catalytic mechanism of both phosphorylation and dephosphorylation. A Mg(2+)-binding site is contributed by glutamate 207. The active site involves arginine 251. Positions 272–277 (PVMPGR) are important for the catalytic mechanism of dephosphorylation.

It belongs to the HPrK/P family. In terms of assembly, homohexamer. Mg(2+) serves as cofactor.

It carries out the reaction [HPr protein]-L-serine + ATP = [HPr protein]-O-phospho-L-serine + ADP + H(+). The enzyme catalyses [HPr protein]-O-phospho-L-serine + phosphate + H(+) = [HPr protein]-L-serine + diphosphate. Its function is as follows. Catalyzes the ATP- as well as the pyrophosphate-dependent phosphorylation of a specific serine residue in HPr, a phosphocarrier protein of the phosphoenolpyruvate-dependent sugar phosphotransferase system (PTS). HprK/P also catalyzes the pyrophosphate-producing, inorganic phosphate-dependent dephosphorylation (phosphorolysis) of seryl-phosphorylated HPr (P-Ser-HPr). In Xanthomonas oryzae pv. oryzae (strain MAFF 311018), this protein is HPr kinase/phosphorylase.